Consider the following 126-residue polypeptide: DNA-directed RNA polymerase subunit omega (126 aa).

Belongs to the RNA polymerase subunit omega family. As to quaternary structure, the RNAP catalytic core consists of 2 alpha, 1 beta, 1 beta' and 1 omega subunit. When a sigma factor is associated with the core the holoenzyme is formed, which can initiate transcription.

It carries out the reaction RNA(n) + a ribonucleoside 5'-triphosphate = RNA(n+1) + diphosphate. Promotes RNA polymerase assembly. Latches the N- and C-terminal regions of the beta' subunit thereby facilitating its interaction with the beta and alpha subunits. The sequence is that of DNA-directed RNA polymerase subunit omega from Paramagnetospirillum magneticum (strain ATCC 700264 / AMB-1) (Magnetospirillum magneticum).